The following is a 307-amino-acid chain: sn-1-specific diacylglycerol lipase ABHD11 (307 aa).

A mitochondrion-targeting transit peptide spans 1-34 (MLRWARAWRVPRGVLGASSPRRLAVPVTFCSSRS). Lys-79 is subject to N6-succinyllysine. The active-site Charge relay system is Ser-133. At Lys-196 the chain carries N6-succinyllysine. Catalysis depends on charge relay system residues Asp-229 and His-288.

It belongs to the AB hydrolase superfamily. In terms of assembly, interacts with OGDH and DLST; this interaction maintains the functional lipoylation of the 2-oxoglutarate dehydrogenase complex. Phosphorylated. Expressed in white adipose tissues.

It is found in the mitochondrion. The protein resides in the mitochondrion matrix. The enzyme catalyses 1-octadecanoyl-2-(5Z,8Z,11Z,14Z-eicosatetraenoyl)-sn-glycerol + H2O = 2-(5Z,8Z,11Z,14Z-eicosatetraenoyl)-glycerol + octadecanoate + H(+). It carries out the reaction a 1,2-diacyl-sn-glycerol + H2O = a 2-acylglycerol + a fatty acid + H(+). It catalyses the reaction a 1,3-diacyl-sn-glycerol + H2O = a 1-acyl-sn-glycerol + a fatty acid + H(+). The catalysed reaction is 1-octadecanoyl-2-(9Z-octadecenoyl)-sn-glycerol + H2O = 2-(9Z-octadecenoyl)-glycerol + octadecanoate + H(+). The enzyme catalyses 1-octadecanoyl-2-(4Z,7Z,10Z,13Z,16Z,19Z-docosahexaenoyl)-sn-glycerol + H2O = 2-(4Z,7Z,10Z,13Z,16Z,19Z-docosahexaenoyl)-glycerol + octadecanoate + H(+). It carries out the reaction 1,2-didecanoylglycerol + H2O = decanoylglycerol + decanoate + H(+). Functionally, catalyzes the hydrolysis of diacylglycerol in vitro and may function as a key regulator in lipid metabolism, namely by regulating the intracellular levels of diacylglycerol. 1,2-diacyl-sn-glycerols are the preferred substrate over 1,3-diacyl-sn-glycerols. The enzyme hydrolyzes stearate in preference to palmitate from the sn-1 position of 1,2-diacyl-sn-glycerols. Maintains the functional lipoylation of the 2-oxoglutarate dehydrogenase complex (OGDHc) through its interaction with the OGDHc by preventing the formation of lipoyl adducts. In addition, is also required for the expansion and differentiation of embryonic stem cells (ESCs). In Mus musculus (Mouse), this protein is sn-1-specific diacylglycerol lipase ABHD11.